Consider the following 642-residue polypeptide: MGKIIGIDLGTTNSCVAVMQGTKPTVIENSEGYRTTPSMVAFTKNGERLVGHAAKRQAITNAENTIFSIKRFMGRKFDEISNEKKIAPYKVTNVNGEARVEIGDKTYSPQEISAMILQKMKQTAEDFLGEKVTEAVITVPAYFNDAQRQATKDAGKIAGLEVKRIINEPTAASLSYGLDTKNENEKVAVFDLGGGTFDISILELGDGVFEVKSTDGDTHLGGDDFDQKIIDFLADEFKKQEGIDLRNDMMALQRLKEAAEKAKVELSSRTDTEINLPFITATQEGPKHLVVNLTRSKFEALCSDLFDSLIAPCKRAIKNSKLKTSEINEVVLVGGSTRIPKVQALVEELFGREPNRSVNPDEVVAVGAAIQGGVLSGDVSDVLLLDVTPLSLGIETLGGVMTKLIEANTTIPSKKQEVFSTAADNQTSVEVHVLQGERPMASDNKTLGRFHLGDIPPAPRGVPQIEVAFDIDSNGILHVSAKDKATGKEQSIRIEASGKLNDAEIEKMKEDAKTHAAEDEKRKEAIDLKNSADALIFSTEKQLGELGDKVPADKKTQLEEALEKLKEAHKSENVETIKPAMDELNTIWNDVASTMYQTPSGDTPPSEPETGASEESKGGDKTQGDGEVDAEYEVIDGNDKDK.

Phosphothreonine; by autocatalysis is present on threonine 196. Over residues 593–603 (STMYQTPSGDT) the composition is skewed to polar residues. Residues 593-642 (STMYQTPSGDTPPSEPETGASEESKGGDKTQGDGEVDAEYEVIDGNDKDK) are disordered. Residues 614–624 (EESKGGDKTQG) are compositionally biased toward basic and acidic residues. Acidic residues predominate over residues 626–636 (GEVDAEYEVID).

Belongs to the heat shock protein 70 family.

Functionally, acts as a chaperone. The sequence is that of Chaperone protein DnaK from Chlorobium phaeobacteroides (strain BS1).